Here is a 1071-residue protein sequence, read N- to C-terminus: Methionine S-methyltransferase (1071 aa).

N-acetylalanine is present on alanine 2.

The protein belongs to the class I-like SAM-binding methyltransferase superfamily. As to quaternary structure, homotetramer. Expressed in roots, rosette leaves and cauline leaves. Expressed at a lower level in developing seeds.

The protein resides in the cytoplasm. The enzyme catalyses L-methionine + S-adenosyl-L-methionine = S-methyl-L-methionine + S-adenosyl-L-homocysteine. Functionally, catalyzes the S-methylmethionine (SMM) biosynthesis from adenosyl-L-homocysteine (AdoMet) and methionine. SMM biosynthesis (by MMT1) and degradation (by HMT-1, HMT-2 and HMT-3) constitute the SMM cycle in plants, which is probably required to achieve short term control of AdoMet level. Also able to catalyze the selenium-methylmethionine (SeMM) from AdoMet and selenium-methionine (SeMet). May play a role in phoem sulfur transport; such function is however not essential. The polypeptide is Methionine S-methyltransferase (MMT1) (Arabidopsis thaliana (Mouse-ear cress)).